The following is a 286-amino-acid chain: uncharacterized protein (286 aa).

The N-terminal stretch at 1–19 is a signal peptide; it reads MISKEYISLLSALLTKGYS.

This is an uncharacterized protein from Acidianus filamentous virus 2 (isolate Italy/Pozzuoli) (AFV-2).